Reading from the N-terminus, the 138-residue chain is Large ribosomal subunit protein uL16 (138 aa).

Residues Met1–Gly19 are compositionally biased toward basic residues. The tract at residues Met1–Gly24 is disordered.

This sequence belongs to the universal ribosomal protein uL16 family. Part of the 50S ribosomal subunit.

Functionally, binds 23S rRNA and is also seen to make contacts with the A and possibly P site tRNAs. This chain is Large ribosomal subunit protein uL16, found in Micrococcus luteus (strain ATCC 4698 / DSM 20030 / JCM 1464 / CCM 169 / CCUG 5858 / IAM 1056 / NBRC 3333 / NCIMB 9278 / NCTC 2665 / VKM Ac-2230) (Micrococcus lysodeikticus).